The chain runs to 649 residues: DNA ligase (649 aa).

Residues 62–66 (DSTYD) and 104–105 (ST) contribute to the NAD(+) site. Lys142 serves as the catalytic N6-AMP-lysine intermediate. Arg158, Glu189, and Lys301 together coordinate NAD(+). Residues Cys389, Cys392, Cys405, and Cys411 each coordinate Zn(2+). Positions 569-649 (PGETPVFGKI…LDYLALISTY (81 aa)) constitute a BRCT domain.

Belongs to the NAD-dependent DNA ligase family. LigA subfamily. The cofactor is Mg(2+). It depends on Mn(2+) as a cofactor.

The catalysed reaction is NAD(+) + (deoxyribonucleotide)n-3'-hydroxyl + 5'-phospho-(deoxyribonucleotide)m = (deoxyribonucleotide)n+m + AMP + beta-nicotinamide D-nucleotide.. Its function is as follows. DNA ligase that catalyzes the formation of phosphodiester linkages between 5'-phosphoryl and 3'-hydroxyl groups in double-stranded DNA using NAD as a coenzyme and as the energy source for the reaction. It is essential for DNA replication and repair of damaged DNA. This Psychromonas ingrahamii (strain DSM 17664 / CCUG 51855 / 37) protein is DNA ligase.